The primary structure comprises 223 residues: 3,4-dihydroxy-2-butanone 4-phosphate synthase (223 aa).

D-ribulose 5-phosphate is bound by residues 39–40, aspartate 44, 152–156, and glutamate 176; these read RE and RRGHT. Glutamate 40 is a Mg(2+) binding site. Position 155 (histidine 155) interacts with Mg(2+).

The protein belongs to the DHBP synthase family. Homodimer. The cofactor is Mg(2+). Mn(2+) is required as a cofactor.

It catalyses the reaction D-ribulose 5-phosphate = (2S)-2-hydroxy-3-oxobutyl phosphate + formate + H(+). The protein operates within cofactor biosynthesis; riboflavin biosynthesis; 2-hydroxy-3-oxobutyl phosphate from D-ribulose 5-phosphate: step 1/1. Catalyzes the conversion of D-ribulose 5-phosphate to formate and 3,4-dihydroxy-2-butanone 4-phosphate. In Desulfovibrio desulfuricans (strain ATCC 27774 / DSM 6949 / MB), this protein is 3,4-dihydroxy-2-butanone 4-phosphate synthase.